The primary structure comprises 273 residues: DnaJ homolog subfamily C member 27 (273 aa).

GTP-binding positions include 23 to 30 (GNAEVGKS), 71 to 75 (DMAGH), and 134 to 137 (NKID). A J domain is found at 217–273 (DSWDMLGVKPGATRDEVNKAYRKLAVLLHPDKCVAPGSEDAFKAVVNARTALLKNIK).

Belongs to the small GTPase superfamily. Rab family.

It localises to the nucleus. GTPase possibly involved in regulation of the MEK/ERK pathway. This chain is DnaJ homolog subfamily C member 27 (DNAJC27), found in Gallus gallus (Chicken).